Consider the following 347-residue polypeptide: MKGSKEIKLTQMVTASGUAAKIGPEDLAKALVGLPKMFDERLLVGFDTSDDAAVYRLDDDKALIQTLDFFTPMVDDPYLFGQIAASNSLSDVYAMVGKPIVAMNIVCFPSCHDMSILGEILKGGADKVIESGAILVGGHTVDDKEPKYGLSVAGLVHPDKVLANSGARPGDALILTKPIGTGIVSTGMKAAMVQKSTEDEVVKIMAHLNKYAAEALDGFNVNSVTDITGFGFLGHAAEMAKGSGVTLEISSKDIPIMSEAEELAKMGIIPAGMYRNKKFIQSDVLCEGVSEHIMDILYDPQTSGGLLVSVPQEHARALADKMTSCGSLAAKIVGRVLSKEEKSIIVI.

Selenocysteine 18 is an active-site residue. A non-standard amino acid (selenocysteine) is located at residue selenocysteine 18. ATP-binding positions include lysine 21 and 48–50 (TSD). Aspartate 51 is a binding site for Mg(2+). Residues aspartate 68, aspartate 91, and 138-140 (GHT) each bind ATP. Aspartate 91 serves as a coordination point for Mg(2+). A Mg(2+)-binding site is contributed by aspartate 226.

It belongs to the selenophosphate synthase 1 family. Class I subfamily. As to quaternary structure, homodimer. It depends on Mg(2+) as a cofactor.

The enzyme catalyses hydrogenselenide + ATP + H2O = selenophosphate + AMP + phosphate + 2 H(+). Its function is as follows. Synthesizes selenophosphate from selenide and ATP. The polypeptide is Selenide, water dikinase 2 (Peptoclostridium acidaminophilum (Eubacterium acidaminophilum)).